Reading from the N-terminus, the 212-residue chain is Glycerol-3-phosphate acyltransferase (212 aa).

The next 6 membrane-spanning stretches (helical) occupy residues 6 to 26, 56 to 76, 92 to 112, 122 to 142, 150 to 170, and 171 to 191; these read IAVLIFTMGYLLGSVPFGLIL, LAALTLFFDIGKGALAVLLAH, LTLIAGAAAFLGHCYPVWLGF, LGVSFAAWWVAGVVFAVAWLL, SSVGGMVGAIAATISVMFMPA, and SHEIHQVYIALFSGMTILLLW.

It belongs to the PlsY family. As to quaternary structure, probably interacts with PlsX.

The protein localises to the cell inner membrane. The enzyme catalyses an acyl phosphate + sn-glycerol 3-phosphate = a 1-acyl-sn-glycero-3-phosphate + phosphate. The protein operates within lipid metabolism; phospholipid metabolism. Catalyzes the transfer of an acyl group from acyl-phosphate (acyl-PO(4)) to glycerol-3-phosphate (G3P) to form lysophosphatidic acid (LPA). This enzyme utilizes acyl-phosphate as fatty acyl donor, but not acyl-CoA or acyl-ACP. This is Glycerol-3-phosphate acyltransferase from Zymomonas mobilis subsp. mobilis (strain ATCC 31821 / ZM4 / CP4).